The chain runs to 544 residues: Matrilin-1 (544 aa).

Positions 1–26 are cleaved as a signal peptide; that stretch reads MRALSGPRLMLCGLLLLLFQAPCALG. In terms of domain architecture, VWFA 1 spans 42-217; the sequence is DLVFVVDSSR…SVIEKLSKKF (176 aa). Asn77 is a glycosylation site (N-linked (GlcNAc...) asparagine). One can recognise an EGF-like domain in the interval 224 to 264; that stretch reads VSDLCATGDHDCEQVCVSSPGSYTCACREGFTLNSDGKTCN. Cystine bridges form between Cys228-Cys239, Cys235-Cys248, and Cys250-Cys263. A VWFA 2 domain is found at 276–448; that stretch reads DLVFLIDGSK…KTINQIGKKL (173 aa). Asn345 is a glycosylation site (N-linked (GlcNAc...) asparagine).

Homotrimer. Part of a complex composed of MATN1 (via VWFA1 domain), type 2 collagens and type 6 collagens. Forms a complex (via covalent bonds) with ACAN; the interaction increases in abundance with increasing age of the organism via an increase in occupancy of MATN1 binding sites. Interacts with COMP. In terms of processing, N-glycosylated; reduces binding affinity for type 2 collagens. In terms of tissue distribution, expressed in trachea from fetus into adulthood (at protein level).

The protein resides in the secreted. Its subcellular location is the extracellular space. It localises to the extracellular matrix. Its function is as follows. A major component of the extracellular matrix of non-articular cartilage. Binds to type 2 collagens and forms long concatenated protein networks as part of the extracellular matrix. Required for the network-like organization and bundling of collagen fibrils surrounding chondrocytes in the zones of maturation and hypertrophy. Required for mechanotransduction and adaption to mechanical loading in cartilage chondrocytes, resulting in an increase in expression of the extracellular matrix components ACAN and COL2A1. Acts as a moderator of angiogenesis in response to injury. The sequence is that of Matrilin-1 from Bos taurus (Bovine).